Here is a 270-residue protein sequence, read N- to C-terminus: Phosphate import ATP-binding protein PstB 1 (270 aa).

One can recognise an ABC transporter domain in the interval 24-265; sequence LAVERLNLFY…PYQRQTEDYI (242 aa). 56–63 is a binding site for ATP; sequence GPSGCGKS.

Belongs to the ABC transporter superfamily. Phosphate importer (TC 3.A.1.7) family. In terms of assembly, the complex is composed of two ATP-binding proteins (PstB), two transmembrane proteins (PstC and PstA) and a solute-binding protein (PstS).

Its subcellular location is the cell inner membrane. It carries out the reaction phosphate(out) + ATP + H2O = ADP + 2 phosphate(in) + H(+). Functionally, part of the ABC transporter complex PstSACB involved in phosphate import. Responsible for energy coupling to the transport system. The polypeptide is Phosphate import ATP-binding protein PstB 1 (Yersinia pestis bv. Antiqua (strain Antiqua)).